Here is a 142-residue protein sequence, read N- to C-terminus: Large ribosomal subunit protein uL13 (142 aa).

Belongs to the universal ribosomal protein uL13 family. As to quaternary structure, part of the 50S ribosomal subunit.

Its function is as follows. This protein is one of the early assembly proteins of the 50S ribosomal subunit, although it is not seen to bind rRNA by itself. It is important during the early stages of 50S assembly. The sequence is that of Large ribosomal subunit protein uL13 from Paraburkholderia phytofirmans (strain DSM 17436 / LMG 22146 / PsJN) (Burkholderia phytofirmans).